Here is a 129-residue protein sequence, read N- to C-terminus: Glycine cleavage system H protein (129 aa).

The 83-residue stretch at 24–106 (TYTVGITEHA…YADGWIFKIK (83 aa)) folds into the Lipoyl-binding domain. N6-lipoyllysine is present on K65.

This sequence belongs to the GcvH family. In terms of assembly, the glycine cleavage system is composed of four proteins: P, T, L and H. The cofactor is (R)-lipoate.

The glycine cleavage system catalyzes the degradation of glycine. The H protein shuttles the methylamine group of glycine from the P protein to the T protein. This Salmonella arizonae (strain ATCC BAA-731 / CDC346-86 / RSK2980) protein is Glycine cleavage system H protein.